Here is a 387-residue protein sequence, read N- to C-terminus: 1-deoxy-D-xylulose 5-phosphate reductoisomerase (387 aa).

NADPH is bound by residues T10, G11, S12, I13, G36, K37, N38, and N123. K124 provides a ligand contact to 1-deoxy-D-xylulose 5-phosphate. Residue E125 coordinates NADPH. Residue D149 coordinates Mn(2+). The 1-deoxy-D-xylulose 5-phosphate site is built by S150, E151, S175, and H198. Residue E151 coordinates Mn(2+). NADPH is bound at residue G204. 1-deoxy-D-xylulose 5-phosphate-binding residues include S211, N216, K217, and E220. E220 serves as a coordination point for Mn(2+).

It belongs to the DXR family. Mg(2+) is required as a cofactor. Mn(2+) serves as cofactor.

It carries out the reaction 2-C-methyl-D-erythritol 4-phosphate + NADP(+) = 1-deoxy-D-xylulose 5-phosphate + NADPH + H(+). It participates in isoprenoid biosynthesis; isopentenyl diphosphate biosynthesis via DXP pathway; isopentenyl diphosphate from 1-deoxy-D-xylulose 5-phosphate: step 1/6. Catalyzes the NADPH-dependent rearrangement and reduction of 1-deoxy-D-xylulose-5-phosphate (DXP) to 2-C-methyl-D-erythritol 4-phosphate (MEP). The polypeptide is 1-deoxy-D-xylulose 5-phosphate reductoisomerase (Pelotomaculum thermopropionicum (strain DSM 13744 / JCM 10971 / SI)).